The chain runs to 33 residues: MRTGTRCDLGELSHPRKTLPPRGMGILCNYTGN.

The segment at 1 to 24 (MRTGTRCDLGELSHPRKTLPPRGM) is disordered.

This is an uncharacterized protein from Treponema pallidum (strain Nichols).